The sequence spans 356 residues: Phosphotriesterase-related protein (356 aa).

6 residues coordinate a divalent metal cation: histidine 23, histidine 25, glutamate 175, histidine 207, histidine 236, and aspartate 304.

Belongs to the metallo-dependent hydrolases superfamily. Phosphotriesterase family. It depends on a divalent metal cation as a cofactor.

This chain is Phosphotriesterase-related protein, found in Aedes aegypti (Yellowfever mosquito).